Here is a 558-residue protein sequence, read N- to C-terminus: NAD-dependent malic enzyme 2 (558 aa).

Y101 serves as the catalytic Proton donor. R154 is a binding site for NAD(+). The active-site Proton acceptor is the K172. The a divalent metal cation site is built by E243, D244, and D267. 2 residues coordinate NAD(+): D267 and N411.

The protein belongs to the malic enzymes family. In terms of assembly, homotetramer. Requires Mg(2+) as cofactor. Mn(2+) serves as cofactor.

The catalysed reaction is (S)-malate + NAD(+) = pyruvate + CO2 + NADH. It catalyses the reaction oxaloacetate + H(+) = pyruvate + CO2. The sequence is that of NAD-dependent malic enzyme 2 from Photobacterium profundum (strain SS9).